The sequence spans 360 residues: 3-isopropylmalate dehydrogenase (360 aa).

76–89 (GPKWDTIERDIRPE) provides a ligand contact to NAD(+). Residues Arg96, Arg106, Arg134, and Asp224 each coordinate substrate. Asp224, Asp248, and Asp252 together coordinate Mg(2+). Position 282–294 (282–294 (GSAPDIAGKGIAN)) interacts with NAD(+).

It belongs to the isocitrate and isopropylmalate dehydrogenases family. LeuB type 1 subfamily. In terms of assembly, homodimer. Requires Mg(2+) as cofactor. Mn(2+) is required as a cofactor.

The protein resides in the cytoplasm. The catalysed reaction is (2R,3S)-3-isopropylmalate + NAD(+) = 4-methyl-2-oxopentanoate + CO2 + NADH. It participates in amino-acid biosynthesis; L-leucine biosynthesis; L-leucine from 3-methyl-2-oxobutanoate: step 3/4. Functionally, catalyzes the oxidation of 3-carboxy-2-hydroxy-4-methylpentanoate (3-isopropylmalate) to 3-carboxy-4-methyl-2-oxopentanoate. The product decarboxylates to 4-methyl-2 oxopentanoate. The sequence is that of 3-isopropylmalate dehydrogenase from Pseudomonas savastanoi pv. phaseolicola (strain 1448A / Race 6) (Pseudomonas syringae pv. phaseolicola (strain 1448A / Race 6)).